Consider the following 327-residue polypeptide: Biotin synthase (327 aa).

One can recognise a Radical SAM core domain in the interval 49 to 282 (FNKEKIDLCS…KKVIRLCGGR (234 aa)). Residues C67, C71, and C74 each coordinate [4Fe-4S] cluster. S110, C142, C201, and R277 together coordinate [2Fe-2S] cluster.

The protein belongs to the radical SAM superfamily. Biotin synthase family. Homodimer. It depends on [4Fe-4S] cluster as a cofactor. The cofactor is [2Fe-2S] cluster.

The catalysed reaction is (4R,5S)-dethiobiotin + (sulfur carrier)-SH + 2 reduced [2Fe-2S]-[ferredoxin] + 2 S-adenosyl-L-methionine = (sulfur carrier)-H + biotin + 2 5'-deoxyadenosine + 2 L-methionine + 2 oxidized [2Fe-2S]-[ferredoxin]. Its pathway is cofactor biosynthesis; biotin biosynthesis; biotin from 7,8-diaminononanoate: step 2/2. Its function is as follows. Catalyzes the conversion of dethiobiotin (DTB) to biotin by the insertion of a sulfur atom into dethiobiotin via a radical-based mechanism. The protein is Biotin synthase of Methanococcus maripaludis (strain C7 / ATCC BAA-1331).